A 202-amino-acid chain; its full sequence is Nucleoside triphosphate pyrophosphatase (202 aa).

Asp79 (proton acceptor) is an active-site residue.

Belongs to the Maf family. A divalent metal cation serves as cofactor.

Its subcellular location is the cytoplasm. The enzyme catalyses a ribonucleoside 5'-triphosphate + H2O = a ribonucleoside 5'-phosphate + diphosphate + H(+). It catalyses the reaction a 2'-deoxyribonucleoside 5'-triphosphate + H2O = a 2'-deoxyribonucleoside 5'-phosphate + diphosphate + H(+). Nucleoside triphosphate pyrophosphatase. May have a dual role in cell division arrest and in preventing the incorporation of modified nucleotides into cellular nucleic acids. This is Nucleoside triphosphate pyrophosphatase from Rhodopseudomonas palustris (strain HaA2).